The primary structure comprises 205 residues: Holliday junction branch migration complex subunit RuvA (205 aa).

The segment at 1-64 (MIGRLRGIIL…EDAQLLFGFN (64 aa)) is domain I. Positions 65-143 (DKQERALFRE…GLSGDLFNSV (79 aa)) are domain II. The tract at residues 144-156 (SDIPLTSPANVDN) is flexible linker. The segment at 157-205 (RVGEPEAEAAAALVALGYKPQEASRMISKIARPDADCETLIRDALRAAL) is domain III.

It belongs to the RuvA family. As to quaternary structure, homotetramer. Forms an RuvA(8)-RuvB(12)-Holliday junction (HJ) complex. HJ DNA is sandwiched between 2 RuvA tetramers; dsDNA enters through RuvA and exits via RuvB. An RuvB hexamer assembles on each DNA strand where it exits the tetramer. Each RuvB hexamer is contacted by two RuvA subunits (via domain III) on 2 adjacent RuvB subunits; this complex drives branch migration. In the full resolvosome a probable DNA-RuvA(4)-RuvB(12)-RuvC(2) complex forms which resolves the HJ.

Its subcellular location is the cytoplasm. Functionally, the RuvA-RuvB-RuvC complex processes Holliday junction (HJ) DNA during genetic recombination and DNA repair, while the RuvA-RuvB complex plays an important role in the rescue of blocked DNA replication forks via replication fork reversal (RFR). RuvA specifically binds to HJ cruciform DNA, conferring on it an open structure. The RuvB hexamer acts as an ATP-dependent pump, pulling dsDNA into and through the RuvAB complex. HJ branch migration allows RuvC to scan DNA until it finds its consensus sequence, where it cleaves and resolves the cruciform DNA. The chain is Holliday junction branch migration complex subunit RuvA from Pectobacterium atrosepticum (strain SCRI 1043 / ATCC BAA-672) (Erwinia carotovora subsp. atroseptica).